The primary structure comprises 562 residues: Tissue-type plasminogen activator (562 aa).

The signal sequence occupies residues 1–19 (MYALKRELWCVLLLCGAIC). Positions 20–32 (TSPSQETHRRLRR) are excised as a propeptide. A propeptide spans 33–35 (GVR) (removed by plasmin). A Fibronectin type-I domain is found at 39–81 (VTCRDEKTQMIYQQHQSWLRPLLRGNRVEHCWCNDGQTQCHSV). 17 cysteine pairs are disulfide-bonded: Cys-41/Cys-71, Cys-69/Cys-78, Cys-86/Cys-97, Cys-91/Cys-108, Cys-110/Cys-119, Cys-127/Cys-208, Cys-148/Cys-190, Cys-179/Cys-203, Cys-215/Cys-296, Cys-236/Cys-278, Cys-267/Cys-291, Cys-299/Cys-430, Cys-342/Cys-358, Cys-350/Cys-419, Cys-444/Cys-519, Cys-476/Cys-492, and Cys-509/Cys-537. An important for binding to annexin A2 region spans residues 42–52 (RDEKTQMIYQQ). The region spanning 82-120 (PVKSCSEPRCFNGGTCLQAIYFSDFVCQCPVGFIGRQCE) is the EGF-like domain. A glycan (O-linked (Fuc) threonine) is linked at Thr-96. 2 Kringle domains span residues 126-208 (TCYE…TPAC) and 214-296 (ECYT…LPQC). An N-linked (GlcNAc...) asparagine glycan is attached at Asn-152. The region spanning 311–561 (IKGGLYADIT…YLNWIRDNTR (251 aa)) is the Peptidase S1 domain. Residues His-357 and Asp-406 each act as charge relay system in the active site. The N-linked (GlcNAc...) asparagine glycan is linked to Asn-483. Residue Ser-513 is the Charge relay system of the active site.

This sequence belongs to the peptidase S1 family. Heterodimer of chain A and chain B held by a disulfide bond. Binds to fibrin with high affinity. This interaction leads to an increase in the catalytic efficiency of the enzyme due to an increase in affinity for plasminogen. Similarly, binding to heparin increases the activation of plasminogen. Binds to annexin A2, cytokeratin-8, fibronectin and laminin. Binds to mannose receptor and the low-density lipoprotein receptor-related protein (LRP1); these proteins are involved in TPA clearance. Binds LRP1B; binding is followed by internalization and degradation. Forms heterodimer with SERPINA5. Interacts with SERPINE1. In complex with SERPINE1, interacts with SORL1. Post-translationally, the single chain, almost fully active enzyme, can be further processed into a two-chain fully active form by a cleavage after Arg-310 catalyzed by plasmin, tissue kallikrein or factor Xa.

The protein localises to the secreted. It is found in the extracellular space. It carries out the reaction Specific cleavage of Arg-|-Val bond in plasminogen to form plasmin.. Inhibited by SERPINA5. Inhibited by SERPINE1. Converts the abundant, but inactive, zymogen plasminogen to plasmin by hydrolyzing a single Arg-Val bond in plasminogen. By controlling plasmin-mediated proteolysis, it plays an important role in tissue remodeling and degradation, in cell migration and many other physiopathological events. During oocyte activation, plays a role in cortical granule reaction in the zona reaction, which contributes to the block to polyspermy. This is Tissue-type plasminogen activator (PLAT) from Sus scrofa (Pig).